Here is a 788-residue protein sequence, read N- to C-terminus: Structure-specific endonuclease subunit SLX4 (788 aa).

Disordered stretches follow at residues 59–86, 562–584, and 599–622; these read LQNE…DNNR, KRQP…HDNS, and DLVN…PSSP. The segment covering 562 to 573 has biased composition (basic and acidic residues); it reads KRQPVDSENEIR. Positions 612 to 622 are enriched in polar residues; it reads DTSVLQVPSSP.

Belongs to the SLX4 family. As to quaternary structure, forms a heterodimer with SLX1. Phosphorylated in response to DNA damage.

The protein resides in the nucleus. In terms of biological role, regulatory subunit of the SLX1-SLX4 structure-specific endonuclease that resolves DNA secondary structures generated during DNA repair and recombination. Has endonuclease activity towards branched DNA substrates, introducing single-strand cuts in duplex DNA close to junctions with ss-DNA. The sequence is that of Structure-specific endonuclease subunit SLX4 from Debaryomyces hansenii (strain ATCC 36239 / CBS 767 / BCRC 21394 / JCM 1990 / NBRC 0083 / IGC 2968) (Yeast).